The sequence spans 150 residues: Toxin coregulated pilus biosynthesis protein Q (150 aa).

Functionally, involved in TCP pilus biogenesis. This chain is Toxin coregulated pilus biosynthesis protein Q (tcpQ), found in Vibrio cholerae serotype O1 (strain ATCC 39315 / El Tor Inaba N16961).